A 478-amino-acid polypeptide reads, in one-letter code: tRNA-2-methylthio-N(6)-dimethylallyladenosine synthase (478 aa).

The MTTase N-terminal domain maps to 39 to 157 (KLVFTQTFGC…FPQLLTESIN (119 aa)). [4Fe-4S] cluster is bound by residues Cys48, Cys84, Cys118, Cys194, Cys198, and Cys201. The 231-residue stretch at 180–410 (RKFELKAFVN…LEAVNRISAE (231 aa)) folds into the Radical SAM core domain. Residues 410–477 (EINDGYKDRI…TFSLNGILVN (68 aa)) enclose the TRAM domain.

Belongs to the methylthiotransferase family. MiaB subfamily. As to quaternary structure, monomer. The cofactor is [4Fe-4S] cluster.

The protein localises to the cytoplasm. The enzyme catalyses N(6)-dimethylallyladenosine(37) in tRNA + (sulfur carrier)-SH + AH2 + 2 S-adenosyl-L-methionine = 2-methylsulfanyl-N(6)-dimethylallyladenosine(37) in tRNA + (sulfur carrier)-H + 5'-deoxyadenosine + L-methionine + A + S-adenosyl-L-homocysteine + 2 H(+). Catalyzes the methylthiolation of N6-(dimethylallyl)adenosine (i(6)A), leading to the formation of 2-methylthio-N6-(dimethylallyl)adenosine (ms(2)i(6)A) at position 37 in tRNAs that read codons beginning with uridine. The sequence is that of tRNA-2-methylthio-N(6)-dimethylallyladenosine synthase from Clostridioides difficile (strain 630) (Peptoclostridium difficile).